The sequence spans 310 residues: Putative methyltransferase mtx subunit H (310 aa).

This sequence belongs to the MtrH family. In terms of assembly, may be part of a complex composed of 3 subunits; MtxA, MtxH and MtxX.

The sequence is that of Putative methyltransferase mtx subunit H (mtxH) from Methanosarcina mazei (strain ATCC BAA-159 / DSM 3647 / Goe1 / Go1 / JCM 11833 / OCM 88) (Methanosarcina frisia).